Here is a 210-residue protein sequence, read N- to C-terminus: Redox-sensing transcriptional repressor Rex (210 aa).

Positions 16 to 55 (IYMRTLQELLEDDVDVISSERLAKQCGVNPAQIRKDLAYF) form a DNA-binding region, H-T-H motif. 90 to 95 (GLGNLG) contacts NAD(+).

Belongs to the transcriptional regulatory Rex family. In terms of assembly, homodimer.

Its subcellular location is the cytoplasm. Functionally, modulates transcription in response to changes in cellular NADH/NAD(+) redox state. The polypeptide is Redox-sensing transcriptional repressor Rex (Syntrophobacter fumaroxidans (strain DSM 10017 / MPOB)).